The primary structure comprises 341 residues: Ribosomal RNA small subunit methyltransferase C (341 aa).

This sequence belongs to the methyltransferase superfamily. RsmC family. As to quaternary structure, monomer.

It localises to the cytoplasm. The catalysed reaction is guanosine(1207) in 16S rRNA + S-adenosyl-L-methionine = N(2)-methylguanosine(1207) in 16S rRNA + S-adenosyl-L-homocysteine + H(+). In terms of biological role, specifically methylates the guanine in position 1207 of 16S rRNA in the 30S particle. The sequence is that of Ribosomal RNA small subunit methyltransferase C from Vibrio parahaemolyticus serotype O3:K6 (strain RIMD 2210633).